Here is a 191-residue protein sequence, read N- to C-terminus: Probable protein-S-isoprenylcysteine O-methyltransferase (191 aa).

3 helical membrane-spanning segments follow: residues 8–28, 45–65, and 66–86; these read WLFAAALVIFHGSEYVLAAAF, YVLAMSFAMLEHLTEALLFPE, and LKEYWFVSYVGLVMVIIGEVI. Residues 110–113, Tyr118, and 123–126 contribute to the S-adenosyl-L-methionine site; these read HKLI and HPGY. Residues 129-149 traverse the membrane as a helical segment; sequence FLIWAVGTQVMLCNPLSTVAF. Residue Arg160 participates in substrate binding. Glu164 contributes to the S-adenosyl-L-methionine binding site.

This sequence belongs to the class VI-like SAM-binding methyltransferase superfamily. Isoprenylcysteine carboxyl methyltransferase family. Zn(2+) is required as a cofactor.

The protein localises to the endoplasmic reticulum membrane. It catalyses the reaction [protein]-C-terminal S-[(2E,6E)-farnesyl]-L-cysteine + S-adenosyl-L-methionine = [protein]-C-terminal S-[(2E,6E)-farnesyl]-L-cysteine methyl ester + S-adenosyl-L-homocysteine. Its function is as follows. Catalyzes the post-translational methylation of isoprenylated C-terminal cysteine residues. Carboxyl methylation is a reversible and potentially regulated step in the post-translational modification of prenylated proteins. This is Probable protein-S-isoprenylcysteine O-methyltransferase (ICMT) from Oryza sativa subsp. indica (Rice).